The primary structure comprises 428 residues: Cyclic AMP-responsive element-binding protein 3-like protein 4 (428 aa).

The segment at 1-68 (MLLGSLFEQT…EFLQMMINPN (68 aa)) is required for transcriptional activation. Residues 1–294 (MLLGSLFEQT…QTSNKAAQTS (294 aa)) are Cytoplasmic-facing. Positions 71–111 (YSTGPAAAESPESDSGFSDDPRPDTPPQSETSPPLPQPTPV) are disordered. A bZIP domain is found at 216 to 279 (ILKKVRRKIR…ISLITQLRKL (64 aa)). Residues 218 to 247 (KKVRRKIRNKQSAQDSRRRKKEYIDGLESR) are basic motif. A leucine-zipper region spans residues 258–279 (LHKKVVELEKHNISLITQLRKL). A helical; Signal-anchor for type II membrane protein membrane pass occupies residues 295–315 (TCVLILLFSLALLVFPSYSPF). The Lumenal segment spans residues 316–428 (RSRPSASQED…LSKTARADEM (113 aa)). Residues 339-428 (NKGGFSEVAD…LSKTARADEM (90 aa)) form a disordered region. Basic and acidic residues predominate over residues 354–368 (TLHRAQQREEGDPGR). Asparagine 418 carries N-linked (GlcNAc...) asparagine glycosylation.

It belongs to the bZIP family. ATF subfamily. In terms of assembly, binds DNA as a dimer. Post-translationally, controlled by regulated intramembrane proteolysis (RIP). A fragment containing the cytoplasmic transcription factor domain is released by proteolysis. The cleavage seems to be performed sequentially by site-1 and site-2 proteases (PS1 and PS2).

Its subcellular location is the endoplasmic reticulum membrane. It localises to the nucleus. Transcriptional activator. The protein is Cyclic AMP-responsive element-binding protein 3-like protein 4 (creb3l4) of Xenopus tropicalis (Western clawed frog).